A 130-amino-acid chain; its full sequence is Neelaredoxin (130 aa).

The Fe cation site is built by Glu15, His17, His45, His51, Cys115, and His118.

The protein belongs to the desulfoferrodoxin family. In terms of assembly, monomer. Fe cation is required as a cofactor.

The enzyme catalyses 2 superoxide + 2 H(+) = H2O2 + O2. In terms of biological role, non-heme iron protein. The chain is Neelaredoxin (nlr) from Megalodesulfovibrio gigas (Desulfovibrio gigas).